The chain runs to 263 residues: Small ribosomal subunit protein eS4 (263 aa).

An S4 RNA-binding domain is found at 42 to 104; sequence LPLIIFLRNR…TGEHFRLVYD (63 aa).

Belongs to the eukaryotic ribosomal protein eS4 family. In terms of assembly, component of the small ribosomal subunit.

The protein localises to the cytoplasm. Component of the small ribosomal subunit. The ribosome is a large ribonucleoprotein complex responsible for the synthesis of proteins in the cell. The sequence is that of Small ribosomal subunit protein eS4 (rps4) from Xenopus laevis (African clawed frog).